Consider the following 82-residue polypeptide: RNA-binding protein Hfq (82 aa).

Residues 11 to 71 (DTFLNHVRKT…ISTIMPGAPI (61 aa)) form the Sm domain.

The protein belongs to the Hfq family. Homohexamer.

RNA chaperone that binds small regulatory RNA (sRNAs) and mRNAs to facilitate mRNA translational regulation in response to envelope stress, environmental stress and changes in metabolite concentrations. Also binds with high specificity to tRNAs. The polypeptide is RNA-binding protein Hfq (Nitrobacter winogradskyi (strain ATCC 25391 / DSM 10237 / CIP 104748 / NCIMB 11846 / Nb-255)).